The sequence spans 287 residues: Aquaporin PIP1-2 (287 aa).

Residues 1–37 form a disordered region; the sequence is MEGKEEDVRLGANKFTERQPIGTAAQSQDKDYKEPPP. The Cytoplasmic segment spans residues 1 to 55; sequence MEGKEEDVRLGANKFTERQPIGTAAQSQDKDYKEPPPAPLFEPGELSSWSFYRAG. The chain crosses the membrane as a helical span at residues 56–76; the sequence is IAEFVATFLFLYITILTVMGV. Topologically, residues 77 to 89 are extracellular; that stretch reads VKSSTKCSTVGIQ. Residues 90–110 traverse the membrane as a helical segment; the sequence is GIAWAFGGMIFALVYCTAGIS. Residues 111 to 133 are Cytoplasmic-facing; it reads GGHINPAVTFGLFLARKLSLTRA. The NPA 1 signature appears at 115–117; the sequence is NPA. A helical transmembrane segment spans residues 134-154; sequence LFYMVMQCLGAICGAGVVKGF. At 155–175 the chain is on the extracellular side; sequence QKGLYENNGGGANVVAPGYTK. Residues 176–196 form a helical membrane-spanning segment; sequence GDGLGAEIVGTFILVYTVFSA. Topologically, residues 197–209 are cytoplasmic; that stretch reads TDAKRSARDSHVP. A helical membrane pass occupies residues 210 to 230; that stretch reads ILAPLPIGFAVFLVHLATIPI. Topologically, residues 231 to 257 are extracellular; that stretch reads TGTGINPARSLGAAIIYNKGHAWDDHW. An NPA 2 motif is present at residues 236–238; that stretch reads NPA. Residues 258-278 form a helical membrane-spanning segment; sequence IFWVGPFIGAALAALYHQVVI. The Cytoplasmic segment spans residues 279 to 287; it reads RAIPFKSRS.

Belongs to the MIP/aquaporin (TC 1.A.8) family. PIP (TC 1.A.8.11) subfamily. In terms of tissue distribution, barely detectable in roots, leaves and fruits.

It is found in the cell membrane. In terms of biological role, water channel required to facilitate the transport of water across cell membrane; mercury-insensitive. Contributes to the tolerance to multiple abiotic stresses including salt (NaCl), cold and water deprivation, by modulating cytosolic K(+)/Na(+) ratio, maintaining osmotic balance, and reducing membrane injury (e.g. oxidative injury). This chain is Aquaporin PIP1-2, found in Musa acuminata subsp. malaccensis (Wild banana).